A 143-amino-acid polypeptide reads, in one-letter code: MGKCRGLRTARKLRDHRREQKWHDKQYKKAHLGTALKANPFGGASHAKGIVLEKVGVEAKQPNSAIRKCVRVQLIKNGKKITAFVPNDGCLNFIEENDEVLVAGFGRKGHAVGDIPGVRFKVVKVANVSLLALYKGKKERPRS.

A compositionally biased stretch (basic residues) spans 1–15; it reads MGKCRGLRTARKLRD. Positions 1–27 are disordered; that stretch reads MGKCRGLRTARKLRDHRREQKWHDKQY. The segment covering 16 to 27 has biased composition (basic and acidic residues); sequence HRREQKWHDKQY.

This sequence belongs to the universal ribosomal protein uS12 family. As to quaternary structure, component of the 40S small ribosomal subunit.

The protein resides in the cytoplasm. It localises to the cytosol. The protein localises to the rough endoplasmic reticulum. The protein is Small ribosomal subunit protein uS12 (rps23) of Ictalurus punctatus (Channel catfish).